A 533-amino-acid polypeptide reads, in one-letter code: Lanosterol 14-alpha demethylase (533 aa).

Heme is bound at residue cysteine 472.

This sequence belongs to the cytochrome P450 family. Heme serves as cofactor.

The protein resides in the membrane. The enzyme catalyses a 14alpha-methyl steroid + 3 reduced [NADPH--hemoprotein reductase] + 3 O2 = a Delta(14) steroid + formate + 3 oxidized [NADPH--hemoprotein reductase] + 4 H2O + 4 H(+). It carries out the reaction a 14alpha-methyl steroid + reduced [NADPH--hemoprotein reductase] + O2 = a 14alpha-hydroxymethyl steroid + oxidized [NADPH--hemoprotein reductase] + H2O + H(+). It catalyses the reaction a 14alpha-hydroxymethyl steroid + reduced [NADPH--hemoprotein reductase] + O2 = a 14alpha-formyl steroid + oxidized [NADPH--hemoprotein reductase] + 2 H2O + H(+). The catalysed reaction is a 14alpha-formyl steroid + reduced [NADPH--hemoprotein reductase] + O2 = a Delta(14) steroid + formate + oxidized [NADPH--hemoprotein reductase] + H2O + 2 H(+). The enzyme catalyses lanosterol + 3 reduced [NADPH--hemoprotein reductase] + 3 O2 = 4,4-dimethyl-5alpha-cholesta-8,14,24-trien-3beta-ol + formate + 3 oxidized [NADPH--hemoprotein reductase] + 4 H2O + 4 H(+). It carries out the reaction lanosterol + reduced [NADPH--hemoprotein reductase] + O2 = 32-hydroxylanosterol + oxidized [NADPH--hemoprotein reductase] + H2O + H(+). It catalyses the reaction 32-hydroxylanosterol + reduced [NADPH--hemoprotein reductase] + O2 = 32-oxolanosterol + oxidized [NADPH--hemoprotein reductase] + 2 H2O + H(+). The catalysed reaction is 32-oxolanosterol + reduced [NADPH--hemoprotein reductase] + O2 = 4,4-dimethyl-5alpha-cholesta-8,14,24-trien-3beta-ol + formate + oxidized [NADPH--hemoprotein reductase] + H2O + 2 H(+). The enzyme catalyses eburicol + 3 reduced [NADPH--hemoprotein reductase] + 3 O2 = 14-demethyleburicol + formate + 3 oxidized [NADPH--hemoprotein reductase] + 4 H2O + 4 H(+). It carries out the reaction eburicol + reduced [NADPH--hemoprotein reductase] + O2 = 32-hydroxyeburicol + oxidized [NADPH--hemoprotein reductase] + H2O + H(+). It catalyses the reaction 32-hydroxyeburicol + reduced [NADPH--hemoprotein reductase] + O2 = 32-oxoeburicol + oxidized [NADPH--hemoprotein reductase] + 2 H2O + H(+). The catalysed reaction is 32-oxoeburicol + reduced [NADPH--hemoprotein reductase] + O2 = 14-demethyleburicol + formate + oxidized [NADPH--hemoprotein reductase] + H2O + 2 H(+). It functions in the pathway steroid biosynthesis; zymosterol biosynthesis; zymosterol from lanosterol: step 1/6. Sterol 14alpha-demethylase that plays a critical role in the third module of ergosterol biosynthesis pathway, being ergosterol the major sterol component in fungal membranes that participates in a variety of functions. The third module or late pathway involves the ergosterol synthesis itself through consecutive reactions that mainly occur in the endoplasmic reticulum (ER) membrane. In filamentous fungi, during the initial step of this module, lanosterol (lanosta-8,24-dien-3beta-ol) can be metabolized to eburicol. Sterol 14alpha-demethylase catalyzes the three-step oxidative removal of the 14alpha-methyl group (C-32) of both these sterols in the form of formate, and converts eburicol and lanosterol to 14-demethyleburicol (4,4,24-trimethylergosta-8,14,24(28)-trienol) and 4,4-dimethyl-5alpha-cholesta-8,14,24-trien-3beta-ol, respectively, which are further metabolized by other enzymes in the pathway to ergosterol. Can also use substrates not intrinsic to fungi, such as 24,25-dihydrolanosterol (DHL), producing 4,4-dimethyl-8,14-cholestadien-3-beta-ol, but at lower rates than the endogenous substrates. The polypeptide is Lanosterol 14-alpha demethylase (ERG11) (Candida glabrata (strain ATCC 2001 / BCRC 20586 / JCM 3761 / NBRC 0622 / NRRL Y-65 / CBS 138) (Yeast)).